The primary structure comprises 138 residues: Fusaristatin A biosynthesis cluster protein FGSG_08206 (138 aa).

Residues 33–130 (VHRVTMFKMP…TIDGMMTVFF (98 aa)) form the Stress-response A/B barrel domain.

The protein operates within secondary metabolite biosynthesis. In terms of biological role, part of the gene cluster that mediates the biosynthesis of the lipopeptide fusaristatin A. Fusaristatin A consists of a polyketide chain linked to three amino acid residues glutamine (Gln), dehydroalanine (dehydro-Ala), and beta-aminoisobutyric acid. The biosynthesis starts with formation of a linear polyketide chain by the highly reducing polyketide synthase PKS6. The gene cluster does not contain an acyl-CoA ligase or an acyl-transferase, and it is therefore predicted that the polyketide is transferred directly to the nonribosomal peptide synthetase NRPS7. Modules 1-3 from NRPS7 incorporate dehydro-Ala, Gln, and beta-aminoisobutyric acid in the compound, which is released by cyclization. The beta-aminoisobutyric acid units are most likely not freely available to the NRPS, but can be synthesized from thymine, which requires a dehydrogenase, a monooxygenase, and an aminotransferase. The fusaristatin A cluster contains a cytochrome P450 monooxygenase (FGSG_08207) and an aminotransferase (FGSG_17085), which theoretically can perform two of the enzymatic steps. The enzymes may however also be involved in biosynthesis of dehydroalanine or modification of the polyketide. The dehydro-Ala residue can be a result of cyclization, where serine is dehydrated. The last gene of the cluster encodes a protein with an A/B barrel domain found in variable enzymes, which hampers functional prediction. The chain is Fusaristatin A biosynthesis cluster protein FGSG_08206 from Gibberella zeae (strain ATCC MYA-4620 / CBS 123657 / FGSC 9075 / NRRL 31084 / PH-1) (Wheat head blight fungus).